Consider the following 485-residue polypeptide: N-succinylglutamate 5-semialdehyde dehydrogenase (485 aa).

220–225 (GSANTG) lines the NAD(+) pocket. Active-site residues include E243 and C278.

Belongs to the aldehyde dehydrogenase family. AstD subfamily.

The enzyme catalyses N-succinyl-L-glutamate 5-semialdehyde + NAD(+) + H2O = N-succinyl-L-glutamate + NADH + 2 H(+). It participates in amino-acid degradation; L-arginine degradation via AST pathway; L-glutamate and succinate from L-arginine: step 4/5. Functionally, catalyzes the NAD-dependent reduction of succinylglutamate semialdehyde into succinylglutamate. The sequence is that of N-succinylglutamate 5-semialdehyde dehydrogenase from Vibrio parahaemolyticus serotype O3:K6 (strain RIMD 2210633).